A 237-amino-acid chain; its full sequence is CDP-diacylglycerol--serine O-phosphatidyltransferase (237 aa).

8 helical membrane passes run 3–23 (INPL…LGMM), 25–45 (IFYA…ASLI), 73–93 (VVAF…YNFG), 95–115 (IGMA…ARFN), 124–144 (YSFI…CVLL), 150–170 (FLEG…GVLM), 184–204 (WNLK…VRPL), and 207–227 (LSVF…FLMV).

It belongs to the CDP-alcohol phosphatidyltransferase class-I family.

Its subcellular location is the cell membrane. The catalysed reaction is a CDP-1,2-diacyl-sn-glycerol + L-serine = a 1,2-diacyl-sn-glycero-3-phospho-L-serine + CMP + H(+). This chain is CDP-diacylglycerol--serine O-phosphatidyltransferase (pssA), found in Helicobacter pylori (strain J99 / ATCC 700824) (Campylobacter pylori J99).